Here is a 102-residue protein sequence, read N- to C-terminus: MTTATPLGDTTFFSLNMTTRGEDFLYKSSGAIVAAVVVVVIIIFTVVLILLKMYNRKMRTRRELEPKGPKPTAPSAVGPNSNGSQHPATVTFSPVDVQVETR.

The Extracellular portion of the chain corresponds to 1-30 (MTTATPLGDTTFFSLNMTTRGEDFLYKSSG). Residues 31 to 51 (AIVAAVVVVVIIIFTVVLILL) traverse the membrane as a helical segment. Residues 52 to 102 (KMYNRKMRTRRELEPKGPKPTAPSAVGPNSNGSQHPATVTFSPVDVQVETR) are Cytoplasmic-facing. The interval 60-102 (TRRELEPKGPKPTAPSAVGPNSNGSQHPATVTFSPVDVQVETR) is disordered. Residues 78 to 92 (GPNSNGSQHPATVTF) are compositionally biased toward polar residues.

Post-translationally, glycosylated.

Its subcellular location is the cell membrane. Functionally, plays a role in myelin formation. This chain is Noncompact myelin-associated protein (NCMAP), found in Homo sapiens (Human).